The sequence spans 387 residues: MACTIQKAEALDGAHLMQILWYDEEESLYPAVWLRDNCPCSDCYLDSAKARKLLVEALDVNIGIKGLIFDRKKVYITWPDEHYSEFQADWLKKRCFSKQARAKLQRELFFPECQYWGSELQLPTLDFEDVLRYDEHAYKWLSTLKKVGIVRLTGASDKPGEVSKLGKRMGFLYLTFYGHTWQVQDKIDANNVAYTTGKLSFHTDYPALHHPPGVQLLHCIKQTVTGGDSEIVDGFNVCQKLKKNNPQAFQILSSTFVDFTDIGVDYCDFSVQSKHKIIELDDKGQVVRINFNNATRDTIFDVPVERVQPFYAALKEFVDLMNSKESKFTFKMNPGDVITFDNWRLLHGRRSYEAGTEISRHLEGAYADWDVVMSRLRILRQRVENGN.

Residues C38, C40, C43, and H82 each contribute to the Zn(2+) site. Positions 202, 204, and 347 each coordinate Fe cation. S351 bears the Phosphoserine mark.

Belongs to the gamma-BBH/TMLD family. Fe(2+) is required as a cofactor. Requires L-ascorbate as cofactor. In terms of tissue distribution, highly expressed in kidney; moderately expressed in liver; very low expression in brain.

The protein resides in the cytoplasm. The enzyme catalyses 4-(trimethylamino)butanoate + 2-oxoglutarate + O2 = carnitine + succinate + CO2. It participates in amine and polyamine biosynthesis; carnitine biosynthesis. In terms of biological role, catalyzes the formation of L-carnitine from gamma-butyrobetaine. The polypeptide is Gamma-butyrobetaine dioxygenase (BBOX1) (Homo sapiens (Human)).